Reading from the N-terminus, the 286-residue chain is uncharacterized protein (286 aa).

An N-terminal signal peptide occupies residues 1-19; the sequence is MISKEYISLLSALLTKGYS.

This is an uncharacterized protein from Acidianus filamentous virus 2 (isolate Italy/Pozzuoli) (AFV-2).